The primary structure comprises 169 residues: Protein-export protein SecB (169 aa).

Belongs to the SecB family. As to quaternary structure, homotetramer, a dimer of dimers. One homotetramer interacts with 1 SecA dimer.

The protein resides in the cytoplasm. Its function is as follows. One of the proteins required for the normal export of preproteins out of the cell cytoplasm. It is a molecular chaperone that binds to a subset of precursor proteins, maintaining them in a translocation-competent state. It also specifically binds to its receptor SecA. This is Protein-export protein SecB from Haemophilus influenzae (strain 86-028NP).